A 313-amino-acid polypeptide reads, in one-letter code: UDP-N-acetylglucosamine 3-dehydrogenase (313 aa).

3 residues coordinate NAD(+): histidine 13, leucine 14, and arginine 38.

It belongs to the Gfo/Idh/MocA family. Exists in multiple oligomeric states.

It catalyses the reaction UDP-N-acetyl-alpha-D-glucosamine + NAD(+) = UDP-2-acetamido-3-dehydro-2-deoxy-alpha-D-glucopyranose + NADH + H(+). It functions in the pathway bacterial outer membrane biogenesis; LPS lipid A biosynthesis. In terms of biological role, oxidoreductase involved in the synthesis of 2,3-diamino-2,3-dideoxy-D-glucopyranose (GlcN3N), which is a component of lipid A in some species. Catalyzes the NAD(+)-dependent oxidation of the glucosamine 3-position of UDP-N-acetyl-glucosamine (UDP-GlcNAc) to a ketone moiety, forming UDP-2-acetamido-3-dehydro-2-deoxy-alpha-D-glucopyranose (UDP-3-oxo-GlcNAc). Is specific for UDP-GlcNAc, no activity is observed with UDP-glucose (UDP-Glc), UDP-glucoronic acid (UDP-GlcA), UDP-galactose (UDP-Gal) and UDP-N-acetylgalactosamine (UDP-GalNAc). Cannot use FAD(+) and NADP(+). In Acidithiobacillus ferrooxidans (strain ATCC 23270 / DSM 14882 / CIP 104768 / NCIMB 8455) (Ferrobacillus ferrooxidans (strain ATCC 23270)), this protein is UDP-N-acetylglucosamine 3-dehydrogenase.